The sequence spans 359 residues: 3-isopropylmalate dehydrogenase (359 aa).

Glycine 74–glutamate 85 is a binding site for NAD(+). Residues arginine 92, arginine 102, arginine 131, and aspartate 220 each contribute to the substrate site. Residues aspartate 220, aspartate 245, and aspartate 249 each coordinate Mg(2+). Glycine 284 to asparagine 295 lines the NAD(+) pocket.

Belongs to the isocitrate and isopropylmalate dehydrogenases family. Homodimer. Mg(2+) is required as a cofactor. It depends on Mn(2+) as a cofactor.

Its subcellular location is the cytoplasm. The enzyme catalyses (2R,3S)-3-isopropylmalate + NAD(+) = 4-methyl-2-oxopentanoate + CO2 + NADH. It participates in amino-acid biosynthesis; L-leucine biosynthesis; L-leucine from 3-methyl-2-oxobutanoate: step 3/4. Its function is as follows. Catalyzes the oxidation of 3-carboxy-2-hydroxy-4-methylpentanoate (3-isopropylmalate) to 3-carboxy-4-methyl-2-oxopentanoate. The product decarboxylates to 4-methyl-2 oxopentanoate. This is 3-isopropylmalate dehydrogenase (LEU2) from Kluyveromyces marxianus (Yeast).